Here is a 298-residue protein sequence, read N- to C-terminus: Acetylglutamate kinase (298 aa).

Residues 69–70 (GG), arginine 91, and asparagine 196 contribute to the substrate site.

It belongs to the acetylglutamate kinase family. ArgB subfamily.

The protein localises to the cytoplasm. It catalyses the reaction N-acetyl-L-glutamate + ATP = N-acetyl-L-glutamyl 5-phosphate + ADP. It functions in the pathway amino-acid biosynthesis; L-arginine biosynthesis; N(2)-acetyl-L-ornithine from L-glutamate: step 2/4. Functionally, catalyzes the ATP-dependent phosphorylation of N-acetyl-L-glutamate. The chain is Acetylglutamate kinase from Nitrobacter hamburgensis (strain DSM 10229 / NCIMB 13809 / X14).